The sequence spans 258 residues: Trans-aconitate 2-methyltransferase (258 aa).

The protein belongs to the methyltransferase superfamily. Tam family.

It localises to the cytoplasm. It catalyses the reaction trans-aconitate + S-adenosyl-L-methionine = (E)-3-(methoxycarbonyl)pent-2-enedioate + S-adenosyl-L-homocysteine. Catalyzes the S-adenosylmethionine monomethyl esterification of trans-aconitate. In Acidovorax sp. (strain JS42), this protein is Trans-aconitate 2-methyltransferase.